We begin with the raw amino-acid sequence, 197 residues long: Xanthine phosphoribosyltransferase (197 aa).

Residues Leu20 and Asn27 each contribute to the xanthine site. 128 to 132 contacts 5-phospho-alpha-D-ribose 1-diphosphate; that stretch reads ANGQA. Xanthine is bound at residue Lys156.

It belongs to the purine/pyrimidine phosphoribosyltransferase family. Xpt subfamily. As to quaternary structure, homodimer.

The protein resides in the cytoplasm. It catalyses the reaction XMP + diphosphate = xanthine + 5-phospho-alpha-D-ribose 1-diphosphate. It functions in the pathway purine metabolism; XMP biosynthesis via salvage pathway; XMP from xanthine: step 1/1. In terms of biological role, converts the preformed base xanthine, a product of nucleic acid breakdown, to xanthosine 5'-monophosphate (XMP), so it can be reused for RNA or DNA synthesis. This chain is Xanthine phosphoribosyltransferase, found in Bacillus mycoides (strain KBAB4) (Bacillus weihenstephanensis).